The sequence spans 676 residues: DNA ligase (676 aa).

NAD(+) contacts are provided by residues 42–46 (DDVYD), 91–92 (SL), and Glu-121. Lys-123 acts as the N6-AMP-lysine intermediate in catalysis. Positions 144, 178, 294, and 318 each coordinate NAD(+). Residues Cys-412, Cys-415, Cys-430, and Cys-435 each contribute to the Zn(2+) site. The BRCT domain occupies 596–676 (NSTSEFTGKR…QLQAAMDETK (81 aa)).

This sequence belongs to the NAD-dependent DNA ligase family. LigA subfamily. Requires Mg(2+) as cofactor. Mn(2+) is required as a cofactor.

It catalyses the reaction NAD(+) + (deoxyribonucleotide)n-3'-hydroxyl + 5'-phospho-(deoxyribonucleotide)m = (deoxyribonucleotide)n+m + AMP + beta-nicotinamide D-nucleotide.. Functionally, DNA ligase that catalyzes the formation of phosphodiester linkages between 5'-phosphoryl and 3'-hydroxyl groups in double-stranded DNA using NAD as a coenzyme and as the energy source for the reaction. It is essential for DNA replication and repair of damaged DNA. The polypeptide is DNA ligase (Levilactobacillus brevis (strain ATCC 367 / BCRC 12310 / CIP 105137 / JCM 1170 / LMG 11437 / NCIMB 947 / NCTC 947) (Lactobacillus brevis)).